The chain runs to 474 residues: GTPase Der (474 aa).

EngA-type G domains follow at residues 2–166 (LRIA…NVPE) and 212–385 (LKIA…TTVS). GTP-binding positions include 8–15 (GRPNVGKS), 55–59 (DTGGV), 118–121 (NKAD), 218–225 (GRPNVGKS), 265–269 (DTAGL), and 330–333 (NKWD). Positions 386–470 (SKVPTPVVNK…PFDLEFKEKT (85 aa)) constitute a KH-like domain.

The protein belongs to the TRAFAC class TrmE-Era-EngA-EngB-Septin-like GTPase superfamily. EngA (Der) GTPase family. As to quaternary structure, associates with the 50S ribosomal subunit.

Its function is as follows. GTPase that plays an essential role in the late steps of ribosome biogenesis. This chain is GTPase Der, found in Chlamydia abortus (strain DSM 27085 / S26/3) (Chlamydophila abortus).